Consider the following 119-residue polypeptide: Ribonuclease P protein component (119 aa).

The protein belongs to the RnpA family. As to quaternary structure, consists of a catalytic RNA component (M1 or rnpB) and a protein subunit.

The enzyme catalyses Endonucleolytic cleavage of RNA, removing 5'-extranucleotides from tRNA precursor.. RNaseP catalyzes the removal of the 5'-leader sequence from pre-tRNA to produce the mature 5'-terminus. It can also cleave other RNA substrates such as 4.5S RNA. The protein component plays an auxiliary but essential role in vivo by binding to the 5'-leader sequence and broadening the substrate specificity of the ribozyme. This is Ribonuclease P protein component from Salmonella paratyphi A (strain AKU_12601).